We begin with the raw amino-acid sequence, 379 residues long: Wnt inhibitory factor 1 (379 aa).

The signal sequence occupies residues 1 to 28 (MARRRAFPAFALRLWSILPCLLLLRADA). Positions 38-177 (LWIDAHQARV…PQNAIFFKTC (140 aa)) constitute a WIF domain. Residue Asn-88 is glycosylated (N-linked (GlcNAc...) asparagine). 7 disulfides stabilise this stretch: Cys-140-Cys-177, Cys-182-Cys-192, Cys-186-Cys-198, Cys-200-Cys-209, Cys-214-Cys-224, Cys-218-Cys-230, and Cys-232-Cys-241. EGF-like domains lie at 178 to 210 (QQAE…PHCE), 211 to 242 (KALC…VNCD), 243 to 271 (KANC…LEGE), 274 to 306 (ELSK…DLCS), and 307 to 338 (KPVC…RHCN). Asn-245 carries N-linked (GlcNAc...) asparagine glycosylation. 8 disulfides stabilise this stretch: Cys-246-Cys-256, Cys-250-Cys-262, Cys-278-Cys-288, Cys-282-Cys-294, Cys-296-Cys-305, Cys-310-Cys-320, Cys-314-Cys-326, and Cys-328-Cys-337. Residues 348 to 379 (APRPAGAGLERHTPSLKKAEDRRDPPESNYIW) are disordered. Over residues 356–373 (LERHTPSLKKAEDRRDPP) the composition is skewed to basic and acidic residues.

In terms of assembly, interacts with MYOC. As to expression, expression highest in heart and lung. Lower in brain and eye.

It is found in the secreted. Its function is as follows. Binds to WNT proteins and inhibits their activities. May be involved in mesoderm segmentation. The chain is Wnt inhibitory factor 1 (Wif1) from Mus musculus (Mouse).